A 911-amino-acid chain; its full sequence is Brevican core protein (911 aa).

Positions 1–22 are cleaved as a signal peptide; that stretch reads MAQLFLPLLAALVLAQAPAALA. The Ig-like V-type domain occupies 36–155; that stretch reads RVRIAGDAPL…SSDAVEVKVK (120 aa). Cystine bridges form between Cys57–Cys137, Cys179–Cys250, Cys203–Cys224, Cys277–Cys352, and Cys301–Cys322. N-linked (GlcNAc...) asparagine glycosylation is present at Asn130. Link domains are found at residues 157-252 and 257-354; these read VVFL…YCYA and GELF…YCFR. A glycan (N-linked (GlcNAc...) asparagine) is linked at Asn337. A disordered region spans residues 391-641; it reads QLPQEATESE…PTDSASRGGV (251 aa). A Phosphoserine modification is found at Ser418. Ser418 carries O-linked (Xyl...) (chondroitin sulfate) serine glycosylation. A compositionally biased stretch (acidic residues) spans 454-478; it reads EEEEKYEDEEEKEEEEEEEEVEDEA. O-glycosylated at two sites regions lie at residues 520-530 and 540-545; these read SPLPDGESEAS and TETLPT. The segment at 569 to 575 is O-glycosylated at one site; sequence TGGPELS. The span at 612–627 shows a compositional bias: polar residues; that stretch reads EDNSGRTAPAGTSVQA. Ala646 carries GPI-anchor amidated alanine lipidation. In terms of domain architecture, EGF-like spans 646–682; the sequence is ASGDCVPSPCHNGGTCLEEEEGVRCLCLPGYGGDLCD. Disulfide bonds link Cys650–Cys661, Cys655–Cys670, Cys672–Cys681, Cys688–Cys699, Cys716–Cys808, Cys784–Cys800, Cys815–Cys858, and Cys844–Cys871. Residues 695–809 form the C-type lectin domain; it reads FQGACYKHFS…CNYHLSYTCK (115 aa). Residues 813–873 form the Sushi domain; it reads VSCGPPPELP…WEAPQISCVP (61 aa). Residues Ser905 and Ser906 are each glycosylated (O-linked (GalNAc...) serine).

The protein belongs to the aggrecan/versican proteoglycan family. As to quaternary structure, interacts with TNR. In terms of processing, O-glycosylated; contains chondroitin sulfate. O-glycosylated with a core 1 or possibly core 8 glycan. Expressed in the retina, specifically in the inner nuclear layer, inner plexiform layer and ganglion cell layer (at protein level). Detected in cerebrospinal fluid (at protein level). Detected in urine (at protein level).

The protein resides in the secreted. It localises to the extracellular space. Its subcellular location is the extracellular matrix. The protein localises to the membrane. Functionally, may play a role in the terminally differentiating and the adult nervous system during postnatal development. Could stabilize interactions between hyaluronan (HA) and brain proteoglycans. In Homo sapiens (Human), this protein is Brevican core protein (BCAN).